The chain runs to 181 residues: Adenine phosphoribosyltransferase (181 aa).

It belongs to the purine/pyrimidine phosphoribosyltransferase family. In terms of assembly, homodimer.

Its subcellular location is the cytoplasm. It catalyses the reaction AMP + diphosphate = 5-phospho-alpha-D-ribose 1-diphosphate + adenine. It participates in purine metabolism; AMP biosynthesis via salvage pathway; AMP from adenine: step 1/1. In terms of biological role, catalyzes a salvage reaction resulting in the formation of AMP, that is energically less costly than de novo synthesis. The protein is Adenine phosphoribosyltransferase of Vibrio parahaemolyticus serotype O3:K6 (strain RIMD 2210633).